The chain runs to 535 residues: Peptide chain release factor 3 (535 aa).

Residues 8 to 277 (KRRRTFAIIS…TLVDLAPPPG (270 aa)) enclose the tr-type G domain. GTP is bound by residues 17–24 (SHPDAGKT), 85–89 (DTPGH), and 139–142 (NKLD).

Belongs to the TRAFAC class translation factor GTPase superfamily. Classic translation factor GTPase family. PrfC subfamily.

It is found in the cytoplasm. In terms of biological role, increases the formation of ribosomal termination complexes and stimulates activities of RF-1 and RF-2. It binds guanine nucleotides and has strong preference for UGA stop codons. It may interact directly with the ribosome. The stimulation of RF-1 and RF-2 is significantly reduced by GTP and GDP, but not by GMP. The sequence is that of Peptide chain release factor 3 from Nitrosomonas eutropha (strain DSM 101675 / C91 / Nm57).